The sequence spans 297 residues: Virulence genes transcriptional activator SpvR (297 aa).

The HTH lysR-type domain occupies 1–61 (MDFLINKKLK…IRKNGTLIPT (61 aa)). Positions 21-40 (FSIATSVLYITRTPLSRVIS) form a DNA-binding region, H-T-H motif.

It belongs to the LysR transcriptional regulatory family.

The protein resides in the cytoplasm. Positive regulator for the plasmid-encoded virulence factors SpvA, SpvB, and SpvC. The polypeptide is Virulence genes transcriptional activator SpvR (spvR) (Salmonella dublin).